A 185-amino-acid chain; its full sequence is uncharacterized protein (185 aa).

The region spanning 39–177 (LWHASAGVLV…SWPFVPDSRA (139 aa)) is the Nudix hydrolase domain. Positions 77 to 99 (GGVVDPGETPQETAIREVGEELG) match the Nudix box motif. Mg(2+) contacts are provided by Glu-93 and Glu-97.

It belongs to the Nudix hydrolase family. The cofactor is Mg(2+).

This is an uncharacterized protein from Rhodococcus erythropolis (Arthrobacter picolinophilus).